Here is a 122-residue protein sequence, read N- to C-terminus: MIQMQSVLDVADNSGARRVMCIKVLGGSHRRYAAIGDIIKVTVKEAIPRGKVKKGDVHSAVVVRTRKGVRRPDGAVIRFDRNAAVMLNANNQPIGTRIFGPVTRELRNEKFMKIVSLAPEVL.

The protein belongs to the universal ribosomal protein uL14 family. Part of the 50S ribosomal subunit. Forms a cluster with proteins L3 and L19. In the 70S ribosome, L14 and L19 interact and together make contacts with the 16S rRNA in bridges B5 and B8.

Functionally, binds to 23S rRNA. Forms part of two intersubunit bridges in the 70S ribosome. This is Large ribosomal subunit protein uL14 from Psychromonas ingrahamii (strain DSM 17664 / CCUG 51855 / 37).